A 271-amino-acid polypeptide reads, in one-letter code: Protein PXR1 (271 aa).

Disordered stretches follow at residues 1-26 (MGLA…NNTS) and 149-233 (KKRP…DSAA). Residues 17 to 26 (RNTTWSNNTS) are compositionally biased toward polar residues. Residues 25-71 (TSRFGHKHLEKLGWKPGSGLGLVPDSTTSHIKVSIKDDNLGLGAKLK) enclose the G-patch domain. The segment covering 165 to 205 (KKTKKVKKEKKVKKVKKEKKEKKEKKDKKEKKVKKEKKEKK) has biased composition (basic residues). Residues 206-230 (EKKLKDKHSKDTNEITRDQMLKPRD) are compositionally biased toward basic and acidic residues.

This sequence belongs to the PINX1 family.

The protein localises to the nucleus. Its subcellular location is the nucleolus. Functionally, involved in rRNA-processing at A0, A1 and A2 sites and negatively regulates telomerase. This is Protein PXR1 (PXR1) from Kluyveromyces lactis (strain ATCC 8585 / CBS 2359 / DSM 70799 / NBRC 1267 / NRRL Y-1140 / WM37) (Yeast).